We begin with the raw amino-acid sequence, 459 residues long: Argininosuccinate lyase (459 aa).

Belongs to the lyase 1 family. Argininosuccinate lyase subfamily.

The protein localises to the cytoplasm. It carries out the reaction 2-(N(omega)-L-arginino)succinate = fumarate + L-arginine. Its pathway is amino-acid biosynthesis; L-arginine biosynthesis; L-arginine from L-ornithine and carbamoyl phosphate: step 3/3. In Staphylococcus aureus (strain bovine RF122 / ET3-1), this protein is Argininosuccinate lyase.